The sequence spans 57 residues: MIQSPTSFLIVLVLLWCKLVISCFRECFVALHQLVQVLLQIINSNLQSRLLLWHSLD.

Residues 1-23 (MIQSPTSFLIVLVLLWCKLVISC) form the signal peptide.

Its function is as follows. Involved in resistance to IFN. This is Non-structural protein 3a from Avian infectious bronchitis virus (strain UK/68/84) (IBV).